The sequence spans 312 residues: Mycothiol acetyltransferase (312 aa).

N-acetyltransferase domains follow at residues 8–136 (PIIR…LPMP) and 149–301 (LRLD…HQDH). Position 38 (Glu38) interacts with 1D-myo-inositol 2-(L-cysteinylamino)-2-deoxy-alpha-D-glucopyranoside. Acetyl-CoA contacts are provided by residues 77 to 79 (LMV) and 85 to 90 (RQGIAT). 1D-myo-inositol 2-(L-cysteinylamino)-2-deoxy-alpha-D-glucopyranoside is bound by residues Glu175, Lys215, and Glu226. Residues 230–232 (LGV) and 237–243 (EGKGVGR) each bind acetyl-CoA. Residue Tyr264 coordinates 1D-myo-inositol 2-(L-cysteinylamino)-2-deoxy-alpha-D-glucopyranoside. 269–274 (NERVVH) is a binding site for acetyl-CoA. Positions 292 to 312 (PAKPARHQDHGRQSSPQERDA) are disordered. The span at 297–312 (RHQDHGRQSSPQERDA) shows a compositional bias: basic and acidic residues.

This sequence belongs to the acetyltransferase family. MshD subfamily. Monomer.

It catalyses the reaction 1D-myo-inositol 2-(L-cysteinylamino)-2-deoxy-alpha-D-glucopyranoside + acetyl-CoA = mycothiol + CoA + H(+). Functionally, catalyzes the transfer of acetyl from acetyl-CoA to desacetylmycothiol (Cys-GlcN-Ins) to form mycothiol. In Propionibacterium freudenreichii subsp. shermanii (strain ATCC 9614 / DSM 4902 / CIP 103027 / NCIMB 8099 / CIRM-BIA1), this protein is Mycothiol acetyltransferase.